The following is a 112-amino-acid chain: Nitrogen regulatory protein GlnK2 (112 aa).

ADP contacts are provided by residues threonine 29, 38–39, valine 64, and 87–90; these read QQ and GDGK. ATP-binding positions include threonine 29, 38-39, valine 64, 87-90, and 101-103; these read QQ, GDGK, and RIR.

The protein belongs to the P(II) protein family. Homotrimer. Interacts and forms a complex with Amt2.

The protein localises to the cytoplasm. Its activity is regulated as follows. Binding of adenosine nucleotides results in distinct, cooperative behavior for ATP and ADP. GlnK2 is completely insensitive to 2-oxoglutarate at a low level of intracellular nitrogen. Functionally, involved in the regulation of nitrogen metabolism. Regulates the activity of its targets by protein-protein interaction in response to the nitrogen status of the cell. Regulates the activity of the ammonia channel Amt2 via direct interaction. This chain is Nitrogen regulatory protein GlnK2, found in Archaeoglobus fulgidus (strain ATCC 49558 / DSM 4304 / JCM 9628 / NBRC 100126 / VC-16).